Reading from the N-terminus, the 343-residue chain is Isopentenyl-diphosphate delta-isomerase (343 aa).

6-7 (RK) provides a ligand contact to substrate. Residues Ser-63, 64–66 (SMT), Ser-94, and Asn-122 each bind FMN. Residue 94 to 96 (SMR) participates in substrate binding. Gln-157 provides a ligand contact to substrate. Mg(2+) is bound at residue Glu-158. FMN-binding positions include Lys-189, Thr-219, 269–271 (GLK), and 290–291 (AG).

It belongs to the IPP isomerase type 2 family. In terms of assembly, homooctamer. Dimer of tetramers. It depends on FMN as a cofactor. NADPH is required as a cofactor. The cofactor is Mg(2+).

Its subcellular location is the cytoplasm. It catalyses the reaction isopentenyl diphosphate = dimethylallyl diphosphate. Functionally, involved in the biosynthesis of isoprenoids. Catalyzes the 1,3-allylic rearrangement of the homoallylic substrate isopentenyl (IPP) to its allylic isomer, dimethylallyl diphosphate (DMAPP). The sequence is that of Isopentenyl-diphosphate delta-isomerase from Rickettsia bellii (strain OSU 85-389).